A 424-amino-acid chain; its full sequence is UPF0597 protein Shewmr7_2876 (424 aa).

It belongs to the UPF0597 family.

In Shewanella sp. (strain MR-7), this protein is UPF0597 protein Shewmr7_2876.